The following is a 220-amino-acid chain: Adenylate kinase (220 aa).

10-15 (GAGKGT) serves as a coordination point for ATP. An NMP region spans residues 30 to 59 (STGDMLRAAVKAGTPLGVEAKTYMDEGKLV). AMP is bound by residues T31, R36, 57–59 (KLV), 85–88 (GFPR), and Q92. Positions 122–159 (GRRTHPASGRTYHVKFNPPKVEGKDDVTGEPLVQRDDD) are LID. ATP contacts are provided by residues R123 and 132–133 (TY). The AMP site is built by R156 and R167. Residue G206 participates in ATP binding.

The protein belongs to the adenylate kinase family. In terms of assembly, monomer.

Its subcellular location is the cytoplasm. The catalysed reaction is AMP + ATP = 2 ADP. The protein operates within purine metabolism; AMP biosynthesis via salvage pathway; AMP from ADP: step 1/1. In terms of biological role, catalyzes the reversible transfer of the terminal phosphate group between ATP and AMP. Plays an important role in cellular energy homeostasis and in adenine nucleotide metabolism. The protein is Adenylate kinase of Burkholderia mallei (strain NCTC 10247).